A 212-amino-acid polypeptide reads, in one-letter code: Large ribosomal subunit protein uL3 (212 aa).

A disordered region spans residues 133–152 (RGSMGHGSKYHRRPGSLGAK).

The protein belongs to the universal ribosomal protein uL3 family. Part of the 50S ribosomal subunit. Forms a cluster with proteins L14 and L19.

Its function is as follows. One of the primary rRNA binding proteins, it binds directly near the 3'-end of the 23S rRNA, where it nucleates assembly of the 50S subunit. This Syntrophomonas wolfei subsp. wolfei (strain DSM 2245B / Goettingen) protein is Large ribosomal subunit protein uL3.